We begin with the raw amino-acid sequence, 442 residues long: Probable carboxypeptidase PADG_04062 (442 aa).

A signal peptide spans 1–20 (MKLQYLVALLSVQAVPPVTA). Asn102 carries N-linked (GlcNAc...) asparagine glycosylation. Asp160 contacts Zn(2+). Glu192 serves as the catalytic Proton acceptor. Glu193 provides a ligand contact to Zn(2+). A glycan (N-linked (GlcNAc...) asparagine) is linked at Asn343.

It belongs to the peptidase M20A family. It depends on Zn(2+) as a cofactor.

The protein localises to the secreted. The sequence is that of Probable carboxypeptidase PADG_04062 from Paracoccidioides brasiliensis (strain Pb18).